The primary structure comprises 215 residues: UPF0173 metal-dependent hydrolase NEQ378 (215 aa).

This sequence belongs to the UPF0173 family.

The protein is UPF0173 metal-dependent hydrolase NEQ378 of Nanoarchaeum equitans (strain Kin4-M).